The sequence spans 205 residues: Small ribosomal subunit protein uS4 (205 aa).

Positions 19-45 are disordered; the sequence is IWGRPKSPVNRREYGPGQHGQRRKGKL. Residues 94 to 157 form the S4 RNA-binding domain; the sequence is SRLDAVVYRA…KQLVIVLEAV (64 aa).

This sequence belongs to the universal ribosomal protein uS4 family. As to quaternary structure, part of the 30S ribosomal subunit. Contacts protein S5. The interaction surface between S4 and S5 is involved in control of translational fidelity.

In terms of biological role, one of the primary rRNA binding proteins, it binds directly to 16S rRNA where it nucleates assembly of the body of the 30S subunit. Its function is as follows. With S5 and S12 plays an important role in translational accuracy. This Brucella anthropi (strain ATCC 49188 / DSM 6882 / CCUG 24695 / JCM 21032 / LMG 3331 / NBRC 15819 / NCTC 12168 / Alc 37) (Ochrobactrum anthropi) protein is Small ribosomal subunit protein uS4.